We begin with the raw amino-acid sequence, 126 residues long: Small nuclear ribonucleoprotein Sm D3 (126 aa).

N-acetylserine is present on S2. A Sm domain is found at 5–77 (VPIKVLHEAE…IRFLILPDML (73 aa)). A run of 5 repeats spans residues 110–111 (RG), 112–113 (RG), 114–115 (RG), 116–117 (MG), and 118–119 (RG). Residues 110–119 (RGRGRGMGRG) are 5 X 2 AA tandem repeats of [RM]-G; required for interaction with SMN1.

This sequence belongs to the snRNP core protein family. In terms of assembly, core component of the spliceosomal U1, U2, U4 and U5 small nuclear ribonucleoproteins (snRNPs), the building blocks of the spliceosome. Most spliceosomal snRNPs contain a common set of Sm proteins, SNRPB, SNRPD1, SNRPD2, SNRPD3, SNRPE, SNRPF and SNRPG that assemble in a heptameric protein ring on the Sm site of the small nuclear RNA to form the core snRNP. Component of the U1 snRNP. The U1 snRNP is composed of the U1 snRNA and the 7 core Sm proteins SNRPB, SNRPD1, SNRPD2, SNRPD3, SNRPE, SNRPF and SNRPG, and at least three U1 snRNP-specific proteins SNRNP70/U1-70K, SNRPA/U1-A and SNRPC/U1-C. Component of the U4/U6-U5 tri-snRNP complex composed of the U4, U6 and U5 snRNAs and at least PRPF3, PRPF4, PRPF6, PRPF8, PRPF31, SNRNP200, TXNL4A, SNRNP40, SNRPB, SNRPD1, SNRPD2, SNRPD3, SNRPE, SNRPF, SNRPG, DDX23, CD2BP2, PPIH, SNU13, EFTUD2, SART1 and USP39, plus LSM2, LSM3, LSM4, LSM5, LSM6, LSM7 and LSM8. Component of the U7 snRNP complex, or U7 Sm protein core complex, that is composed of the U7 snRNA and at least LSM10, LSM11, SNRPB, SNRPD3, SNRPE, SNRPF and SNRPG; the complex does not contain SNRPD1 and SNRPD2. Component of the minor spliceosome, which splices U12-type introns. Part of the SMN-Sm complex that contains SMN1, GEMIN2/SIP1, DDX20/GEMIN3, GEMIN4, GEMIN5, GEMIN6, GEMIN7, GEMIN8, STRAP/UNRIP and the Sm proteins SNRPB, SNRPD1, SNRPD2, SNRPD3, SNRPE, SNRPF and SNRPG; catalyzes core snRNPs assembly. Forms a 6S pICln-Sm complex composed of CLNS1A/pICln, SNRPD1, SNRPD2, SNRPE, SNRPF and SNRPG; ring-like structure where CLNS1A/pICln mimics additional Sm proteins and which is unable to assemble into the core snRNP. Interacts (via C-terminus) with SMN1 (via Tudor domain); the interaction is direct. In terms of processing, methylated on arginine residues by PRMT5 and PRMT7; probable asymmetric dimethylation which is required for assembly and biogenesis of snRNPs.

It localises to the cytoplasm. The protein localises to the cytosol. Its subcellular location is the nucleus. In terms of biological role, plays a role in pre-mRNA splicing as a core component of the spliceosomal U1, U2, U4 and U5 small nuclear ribonucleoproteins (snRNPs), the building blocks of the spliceosome. Component of both the pre-catalytic spliceosome B complex and activated spliceosome C complexes. As a component of the minor spliceosome, involved in the splicing of U12-type introns in pre-mRNAs. As part of the U7 snRNP it is involved in histone pre-mRNA 3'-end processing. This chain is Small nuclear ribonucleoprotein Sm D3 (SNRPD3), found in Homo sapiens (Human).